The primary structure comprises 147 residues: Large ribosomal subunit protein uL11 (147 aa).

It belongs to the universal ribosomal protein uL11 family. As to quaternary structure, part of the ribosomal stalk of the 50S ribosomal subunit. Interacts with L10 and the large rRNA to form the base of the stalk. L10 forms an elongated spine to which L12 dimers bind in a sequential fashion forming a multimeric L10(L12)X complex. One or more lysine residues are methylated.

Its function is as follows. Forms part of the ribosomal stalk which helps the ribosome interact with GTP-bound translation factors. This is Large ribosomal subunit protein uL11 from Bacteroides thetaiotaomicron (strain ATCC 29148 / DSM 2079 / JCM 5827 / CCUG 10774 / NCTC 10582 / VPI-5482 / E50).